A 143-amino-acid chain; its full sequence is Large ribosomal subunit protein uL11 (143 aa).

It belongs to the universal ribosomal protein uL11 family. As to quaternary structure, part of the ribosomal stalk of the 50S ribosomal subunit. Interacts with L10 and the large rRNA to form the base of the stalk. L10 forms an elongated spine to which L12 dimers bind in a sequential fashion forming a multimeric L10(L12)X complex. Post-translationally, one or more lysine residues are methylated.

Its function is as follows. Forms part of the ribosomal stalk which helps the ribosome interact with GTP-bound translation factors. This is Large ribosomal subunit protein uL11 from Azotobacter vinelandii (strain DJ / ATCC BAA-1303).